The following is a 598-amino-acid chain: Transcription factor cpaR (598 aa).

The zn(2)-C6 fungal-type DNA-binding region spans 22-51; the sequence is CNGCRERKRRCVRRKRELPCLSCQAENRPC.

It is found in the nucleus. Functionally, transcription factor; part of the gene cluster that mediates the biosynthesis of the fungal neurotoxin cyclopiazonic acid (CPA), a nanomolar inhibitor of Ca(2+)-ATPase with a unique pentacyclic indole tetramic acid scaffold. The sequence is that of Transcription factor cpaR from Aspergillus oryzae (Yellow koji mold).